We begin with the raw amino-acid sequence, 215 residues long: Enolase-phosphatase E1 (215 aa).

Residues Asp11 and Glu13 each coordinate Mg(2+). Residues 117 to 118 (SS) and Lys151 contribute to the substrate site. Residue Asp174 coordinates Mg(2+).

This sequence belongs to the HAD-like hydrolase superfamily. MasA/MtnC family. Monomer. It depends on Mg(2+) as a cofactor.

The protein localises to the cytoplasm. It is found in the nucleus. The catalysed reaction is 5-methylsulfanyl-2,3-dioxopentyl phosphate + H2O = 1,2-dihydroxy-5-(methylsulfanyl)pent-1-en-3-one + phosphate. It participates in amino-acid biosynthesis; L-methionine biosynthesis via salvage pathway; L-methionine from S-methyl-5-thio-alpha-D-ribose 1-phosphate: step 3/6. It functions in the pathway amino-acid biosynthesis; L-methionine biosynthesis via salvage pathway; L-methionine from S-methyl-5-thio-alpha-D-ribose 1-phosphate: step 4/6. Its function is as follows. Bifunctional enzyme that catalyzes the enolization of 2,3-diketo-5-methylthiopentyl-1-phosphate (DK-MTP-1-P) into the intermediate 2-hydroxy-3-keto-5-methylthiopentenyl-1-phosphate (HK-MTPenyl-1-P), which is then dephosphorylated to form the acireductone 1,2-dihydroxy-3-keto-5-methylthiopentene (DHK-MTPene). The polypeptide is Enolase-phosphatase E1 (utr4) (Schizosaccharomyces japonicus (strain yFS275 / FY16936) (Fission yeast)).